A 2340-amino-acid chain; its full sequence is Protein pad-1 (2340 aa).

2 disordered regions span residues 411 to 458 and 1910 to 1959; these read KLIK…EPSI and TRNS…RRDP. Over residues 415 to 432 the composition is skewed to basic and acidic residues; that stretch reads KRPDSKPPRKPGDREGLH. Polar residues predominate over residues 437 to 448; that stretch reads SLHSGVSGNSED. Positions 1922–1934 are enriched in low complexity; the sequence is GGSITSGSTSTTT.

Belongs to the DOP1 family.

Essential for cell patterning during gastrulation. May be involved in protein traffic between late Golgi and early endosomes. This chain is Protein pad-1 (pad-1), found in Caenorhabditis briggsae.